A 336-amino-acid chain; its full sequence is 4-hydroxy-3-methylbut-2-enyl diphosphate reductase (336 aa).

C37 contacts [4Fe-4S] cluster. Positions 66 and 99 each coordinate (2E)-4-hydroxy-3-methylbut-2-enyl diphosphate. Residues H66 and H99 each coordinate dimethylallyl diphosphate. H66 and H99 together coordinate isopentenyl diphosphate. C121 contacts [4Fe-4S] cluster. H149 is a (2E)-4-hydroxy-3-methylbut-2-enyl diphosphate binding site. A dimethylallyl diphosphate-binding site is contributed by H149. Residue H149 coordinates isopentenyl diphosphate. E151 acts as the Proton donor in catalysis. Residue T189 participates in (2E)-4-hydroxy-3-methylbut-2-enyl diphosphate binding. Residue C219 coordinates [4Fe-4S] cluster. Positions 247, 248, 249, and 292 each coordinate (2E)-4-hydroxy-3-methylbut-2-enyl diphosphate. Dimethylallyl diphosphate is bound by residues S247, S248, N249, and S292. Isopentenyl diphosphate contacts are provided by S247, S248, N249, and S292.

It belongs to the IspH family. It depends on [4Fe-4S] cluster as a cofactor.

It carries out the reaction isopentenyl diphosphate + 2 oxidized [2Fe-2S]-[ferredoxin] + H2O = (2E)-4-hydroxy-3-methylbut-2-enyl diphosphate + 2 reduced [2Fe-2S]-[ferredoxin] + 2 H(+). The catalysed reaction is dimethylallyl diphosphate + 2 oxidized [2Fe-2S]-[ferredoxin] + H2O = (2E)-4-hydroxy-3-methylbut-2-enyl diphosphate + 2 reduced [2Fe-2S]-[ferredoxin] + 2 H(+). Its pathway is isoprenoid biosynthesis; dimethylallyl diphosphate biosynthesis; dimethylallyl diphosphate from (2E)-4-hydroxy-3-methylbutenyl diphosphate: step 1/1. It participates in isoprenoid biosynthesis; isopentenyl diphosphate biosynthesis via DXP pathway; isopentenyl diphosphate from 1-deoxy-D-xylulose 5-phosphate: step 6/6. Catalyzes the conversion of 1-hydroxy-2-methyl-2-(E)-butenyl 4-diphosphate (HMBPP) into a mixture of isopentenyl diphosphate (IPP) and dimethylallyl diphosphate (DMAPP). Acts in the terminal step of the DOXP/MEP pathway for isoprenoid precursor biosynthesis. This Rhodococcus opacus (strain B4) protein is 4-hydroxy-3-methylbut-2-enyl diphosphate reductase.